A 306-amino-acid chain; its full sequence is UDP-3-O-acyl-N-acetylglucosamine deacetylase (306 aa).

Zn(2+)-binding residues include H79, H238, and D242. The Proton donor role is filled by H265.

It belongs to the LpxC family. Zn(2+) serves as cofactor.

It carries out the reaction a UDP-3-O-[(3R)-3-hydroxyacyl]-N-acetyl-alpha-D-glucosamine + H2O = a UDP-3-O-[(3R)-3-hydroxyacyl]-alpha-D-glucosamine + acetate. Its pathway is glycolipid biosynthesis; lipid IV(A) biosynthesis; lipid IV(A) from (3R)-3-hydroxytetradecanoyl-[acyl-carrier-protein] and UDP-N-acetyl-alpha-D-glucosamine: step 2/6. In terms of biological role, catalyzes the hydrolysis of UDP-3-O-myristoyl-N-acetylglucosamine to form UDP-3-O-myristoylglucosamine and acetate, the committed step in lipid A biosynthesis. This chain is UDP-3-O-acyl-N-acetylglucosamine deacetylase, found in Idiomarina loihiensis (strain ATCC BAA-735 / DSM 15497 / L2-TR).